Reading from the N-terminus, the 136-residue chain is Translation initiation factor 5A (136 aa).

Residue K38 is modified to Hypusine.

Belongs to the eIF-5A family.

It localises to the cytoplasm. Its function is as follows. Functions by promoting the formation of the first peptide bond. The sequence is that of Translation initiation factor 5A from Methanopyrus kandleri (strain AV19 / DSM 6324 / JCM 9639 / NBRC 100938).